The sequence spans 422 residues: UPF0229 protein SO_2883 (422 aa).

Residues 60–111 (SEPMFHQGKGGVRDRVHPGNDQFTRGDKIDRPQGGSGGGAGKGDASDSGEGN) form a disordered region. Basic and acidic residues predominate over residues 70–90 (GVRDRVHPGNDQFTRGDKIDR).

This sequence belongs to the UPF0229 family.

This is UPF0229 protein SO_2883 from Shewanella oneidensis (strain ATCC 700550 / JCM 31522 / CIP 106686 / LMG 19005 / NCIMB 14063 / MR-1).